The chain runs to 173 residues: NADH-ubiquinone oxidoreductase chain 6 (173 aa).

The next 5 helical transmembrane spans lie at M1–S21, Y27–G47, V48–V68, V87–F107, and C139–L159.

The protein belongs to the complex I subunit 6 family.

It is found in the mitochondrion membrane. The catalysed reaction is a ubiquinone + NADH + 5 H(+)(in) = a ubiquinol + NAD(+) + 4 H(+)(out). Functionally, core subunit of the mitochondrial membrane respiratory chain NADH dehydrogenase (Complex I) that is believed to belong to the minimal assembly required for catalysis. Complex I functions in the transfer of electrons from NADH to the respiratory chain. The immediate electron acceptor for the enzyme is believed to be ubiquinone. This Aethia cristatella (Crested auklet) protein is NADH-ubiquinone oxidoreductase chain 6 (MT-ND6).